The sequence spans 533 residues: Calcium-dependent protein kinase 12 (533 aa).

The interval 1–77 (MGNCFTKTYE…RASGGGGEMG (77 aa)) is disordered. The N-myristoyl glycine moiety is linked to residue G2. Basic and acidic residues predominate over residues 26-38 (ERSKARGGDEPGT). Residues 57-69 (GSSSAAGALSRRA) are compositionally biased toward low complexity. A Protein kinase domain is found at 91–349 (YQLDRKLGSG…ASQALEHRWL (259 aa)). ATP is bound by residues 97–105 (LGSGQFGTT) and K120. The Proton acceptor role is filled by D215. The autoinhibitory domain stretch occupies residues 354-384 (ASDRPIDSAVLSRMKQFKAMNKLKQLALKVI). 4 consecutive EF-hand domains span residues 391–426 (EEIK…LGSR), 427–462 (ISEA…KHKL), 463–498 (EKEE…YGMG), and 499–533 (DEAN…GIQT). Residues D404, D406, S408, T410, E415, D440, D442, S444, S446, E451, D476, D478, S480, Y482, E487, D511, D513, D515, R517, and E522 each contribute to the Ca(2+) site.

The protein belongs to the protein kinase superfamily. Ser/Thr protein kinase family. CDPK subfamily. Expressed in roots, leaf blades and developing seeds. Expressed in vascular tissues of roots and leaf blades. Expressed in the phloem tissue of the large vascular bundle in leaf blades.

It is found in the membrane. The enzyme catalyses L-seryl-[protein] + ATP = O-phospho-L-seryl-[protein] + ADP + H(+). It carries out the reaction L-threonyl-[protein] + ATP = O-phospho-L-threonyl-[protein] + ADP + H(+). Activated by calcium. Autophosphorylation may play an important role in the regulation of the kinase activity. May play a role in signal transduction pathways that involve calcium as a second messenger. Functions in signal transduction pathways that positively regulate responses to low-nitrogen. Functions in multiple signaling pathways, positively regulating salt tolerance and negatively modulating rice blast fungus resistance. May promote tolerance to salt stress by negatively regulating NADPH oxidase and positively regulating reactive oxygen species (ROS) scavengers. The protein is Calcium-dependent protein kinase 12 of Oryza sativa subsp. japonica (Rice).